The chain runs to 461 residues: Nicotianamine aminotransferase A (461 aa).

Residues 1 to 29 (MVHQSNGHGEAAAAAANGKSNGHAAAANG) are disordered. The span at 11-29 (AAAAAANGKSNGHAAAANG) shows a compositional bias: low complexity. N6-(pyridoxal phosphate)lysine is present on Lys-289.

This sequence belongs to the class-I pyridoxal-phosphate-dependent aminotransferase family. The cofactor is pyridoxal 5'-phosphate. In terms of tissue distribution, expressed in roots, but not in leaves.

It catalyses the reaction nicotianamine + 2-oxoglutarate = 3''-deamino-3''-oxonicotianamine + L-glutamate. Involved in biosynthesis of mugineic acid family phytosiderophores. The polypeptide is Nicotianamine aminotransferase A (Hordeum vulgare (Barley)).